The chain runs to 422 residues: Serine--tRNA ligase (422 aa).

Position 229–231 (229–231 (TAE)) interacts with L-serine. Residue 260-262 (RAE) coordinates ATP. L-serine is bound at residue Glu-283. 347-350 (EISS) serves as a coordination point for ATP. An L-serine-binding site is contributed by Ser-383.

The protein belongs to the class-II aminoacyl-tRNA synthetase family. Type-1 seryl-tRNA synthetase subfamily. As to quaternary structure, homodimer. The tRNA molecule binds across the dimer.

Its subcellular location is the cytoplasm. The catalysed reaction is tRNA(Ser) + L-serine + ATP = L-seryl-tRNA(Ser) + AMP + diphosphate + H(+). It carries out the reaction tRNA(Sec) + L-serine + ATP = L-seryl-tRNA(Sec) + AMP + diphosphate + H(+). The protein operates within aminoacyl-tRNA biosynthesis; selenocysteinyl-tRNA(Sec) biosynthesis; L-seryl-tRNA(Sec) from L-serine and tRNA(Sec): step 1/1. Catalyzes the attachment of serine to tRNA(Ser). Is also able to aminoacylate tRNA(Sec) with serine, to form the misacylated tRNA L-seryl-tRNA(Sec), which will be further converted into selenocysteinyl-tRNA(Sec). This chain is Serine--tRNA ligase, found in Heliobacterium modesticaldum (strain ATCC 51547 / Ice1).